Consider the following 132-residue polypeptide: SH2 domain-containing protein 1B (132 aa).

The region spanning 5-101 (YYHGRLTKQD…GMVVHLLKPI (97 aa)) is the SH2 domain. Tyr127 bears the Phosphotyrosine mark.

As to quaternary structure, binds to the phosphorylated receptors CD84, SLAMF1, LY9 and CD244. Does not bind to non-phosphorylated SLAMF1. Interacts with SLAMF7 (via ITSM phosphorylated on 'Tyr-304'). Interacts with Src kinases HCK, LYN, FYN, FGR and LCK (via kinase domains). Interacts (phosphorylated at Tyr-127) with PLCG1.

Cytoplasmic adapter regulating receptors of the signaling lymphocytic activation molecule (SLAM) family such as CD84, SLAMF1, LY9 and CD244. In SLAM signaling seems to cooperate with SH2D1A/SAP. Plays a role in regulation of effector functions of natural killer (NK) cells by controlling signal transduction through CD244/2B4 without effecting its tyrosine phosphorylation; downstream signaling involves PLCG1 and ERK activation. Activation of SLAMF7-mediated NK cell function does not effect receptor tyrosine phosphorylation but distal signaling. In the context of NK cell-mediated cytotoxicity does not enhance conjugate formation with target cells but stimulates polarization of the microtubule-organizing center and cytotoxic granules toward the NK cell synapse. Negatively regulates CD40-induced cytokine production in dendritic cells downstream of SLAM family receptors probably by inducing activation of the PI3K pathway to inhibit p38 MAPK and JNK activation. The sequence is that of SH2 domain-containing protein 1B (SH2D1B) from Homo sapiens (Human).